The chain runs to 212 residues: Cytidylate kinase (212 aa).

7 to 15 (GPAASGKGT) contributes to the ATP binding site.

This sequence belongs to the cytidylate kinase family. Type 1 subfamily.

Its subcellular location is the cytoplasm. It catalyses the reaction CMP + ATP = CDP + ADP. The catalysed reaction is dCMP + ATP = dCDP + ADP. The polypeptide is Cytidylate kinase (Rhodopseudomonas palustris (strain TIE-1)).